Here is a 418-residue protein sequence, read N- to C-terminus: uncharacterized protein (418 aa).

The interval 1–24 is disordered; it reads MSGTAGFITVSPGPPTEAPGGFPR.

This sequence to A.pernix APE_1276 and S.solfataricus SSO2105.

This is an uncharacterized protein from Aeropyrum pernix (strain ATCC 700893 / DSM 11879 / JCM 9820 / NBRC 100138 / K1).